The chain runs to 160 residues: Serine-protein kinase RsbW (160 aa).

It belongs to the anti-sigma-factor family.

The catalysed reaction is L-seryl-[protein] + ATP = O-phospho-L-seryl-[protein] + ADP + H(+). The enzyme catalyses L-threonyl-[protein] + ATP = O-phospho-L-threonyl-[protein] + ADP + H(+). Its function is as follows. Negative regulator of sigma-B activity. Phosphorylates and inactivates its specific antagonist protein, RsbV. Upon phosphorylation of RsbV, RsbW is released and binds to sigma-B, thereby blocking its ability to form an RNA polymerase holoenzyme (E-sigma-B). This is Serine-protein kinase RsbW from Bacillus cereus (strain Q1).